We begin with the raw amino-acid sequence, 105 residues long: MKNKEREIIKIILRAYDHHLIDQAAKKIIDIVTKTGAQIEGPIPLPTKKEVFTVLRSPFVNKDSREQFERRTHKRLIQIVNPNNKTIESLMHINLPSAIDILLKK.

Belongs to the universal ribosomal protein uS10 family. In terms of assembly, part of the 30S ribosomal subunit.

In terms of biological role, involved in the binding of tRNA to the ribosomes. This chain is Small ribosomal subunit protein uS10, found in Phytoplasma australiense.